Reading from the N-terminus, the 585-residue chain is Complement component C8 alpha chain (585 aa).

A signal peptide spans 1–20; that stretch reads MLVAAFFTLFLVTCQPAVTA. The propeptide occupies 21–30; the sequence is QEKVNQRVNR. In terms of domain architecture, TSP type-1 1 spans 38 to 91; sequence DCQLSSWSEWTDCFPCQDTKYRHRSLLQPNKFGGTICSGDIWDRASCYSPTACL. 7 disulfide bridges follow: C39-C74, C50-C84, C53-C90, C96-C108, C102-C121, C115-C130, and C140-C177. W44 carries C-linked (Man) tryptophan glycosylation. Positions 94-132 constitute an LDL-receptor class A domain; it reads AQCGQDFQCKETGRCLKRHLVCNGENDCLDGSDEDNCED. Residues L113, N116, E118, D120, D126, and E127 each coordinate Ca(2+). The 364-residue stretch at 136–499 folds into the MACPF domain; it reads TESDCAQYDP…QYLMEFNACR (364 aa). The next 4 beta stranded transmembrane spans lie at 248–256, 259–266, 377–384, and 391–396; these read AGVTISAGL, SPLLGTVG, GGFGEIQY, and AQGILS. C375 and C400 are disulfide-bonded. Residue N438 is glycosylated (N-linked (GlcNAc...) asparagine). Disulfide bonds link C498–C545, C500–C516, C503–C518, and C520–C529. The EGF-like domain maps to 499–530; that stretch reads RCGPCFNNGKPILEGTSCRCQCSLGLQGPACE. One can recognise a TSP type-1 2 domain in the interval 540-584; the sequence is DGHWSCWGSWSPCTAGTRERRRECNNPAPQNGGAPCPGWRVQTQA. Residues W543, W546, and W549 are each glycosylated (C-linked (Man) tryptophan). 2 disulfides stabilise this stretch: C552–C585 and C563–C575.

The protein belongs to the complement C6/C7/C8/C9 family. In terms of assembly, heterotrimer of 3 chains: alpha (C8A), beta (C8B) and gamma (C8G); the alpha and gamma chains are disulfide bonded. Component of the membrane attack complex (MAC), composed of complement C5b, C6, C7, C8A, C8B, C8G and multiple copies of the pore-forming subunit C9.

It is found in the secreted. It localises to the target cell membrane. With respect to regulation, membrane attack complex (MAC) assembly is inhibited by CD59, thereby protecting self-cells from damage during complement activation. CD59 acts by binding to the beta-haipins of C8 (C8A and C8B), forming an intermolecular beta-sheet that prevents incorporation of the multiple copies of C9 required for complete formation of the osmolytic pore. MAC assembly is also inhibited by clusterin (CLU) chaperones that inhibit polymerization of C9. Its function is as follows. Component of the membrane attack complex (MAC), a multiprotein complex activated by the complement cascade, which inserts into a target cell membrane and forms a pore, leading to target cell membrane rupture and cell lysis. The MAC is initiated by proteolytic cleavage of C5 into complement C5b in response to the classical, alternative, lectin and GZMK complement pathways. The complement pathways consist in a cascade of proteins that leads to phagocytosis and breakdown of pathogens and signaling that strengthens the adaptive immune system. C8A, together with C8B and C8G, inserts into the target membrane, but does not form pores by itself. During MAC assembly, associates with C5b, C6 and C7 to form the C5b8 intermediate complex that inserts into the target membrane and traverses the bilayer increasing membrane rigidity. The polypeptide is Complement component C8 alpha chain (C8A) (Oryctolagus cuniculus (Rabbit)).